Reading from the N-terminus, the 609-residue chain is UvrABC system protein C (609 aa).

The 78-residue stretch at 15 to 92 folds into the GIY-YIG domain; the sequence is TGSGVYQMQD…IKQFRPRYNV (78 aa). Residues 202–237 form the UVR domain; that stretch reads DQVIIKLTERMEVASENLVFEEAAHYRDQIRQLRRL.

It belongs to the UvrC family. Interacts with UvrB in an incision complex.

The protein resides in the cytoplasm. In terms of biological role, the UvrABC repair system catalyzes the recognition and processing of DNA lesions. UvrC both incises the 5' and 3' sides of the lesion. The N-terminal half is responsible for the 3' incision and the C-terminal half is responsible for the 5' incision. This chain is UvrABC system protein C, found in Coxiella burnetii (strain RSA 331 / Henzerling II).